Reading from the N-terminus, the 102-residue chain is Large ribosomal subunit protein bL21 (102 aa).

The protein belongs to the bacterial ribosomal protein bL21 family. As to quaternary structure, part of the 50S ribosomal subunit. Contacts protein L20.

This protein binds to 23S rRNA in the presence of protein L20. This is Large ribosomal subunit protein bL21 from Geobacter sp. (strain M21).